Reading from the N-terminus, the 830-residue chain is P-selectin (830 aa).

Positions 1-41 (MANCQIAILYQRFQRVVFGISQLLCFSALISELTNQKEVAA) are cleaved as a signal peptide. The Extracellular segment spans residues 42-771 (WTYHYSTKAY…QAGPLTIQEA (730 aa)). N-linked (GlcNAc...) asparagine glycans are attached at residues Asn-54 and Asn-98. The C-type lectin domain occupies 58 to 158 (KYCQNRYTDL…HCLKKKHALC (101 aa)). 23 cysteine pairs are disulfide-bonded: Cys-60-Cys-158, Cys-131-Cys-150, Cys-163-Cys-174, Cys-168-Cys-183, Cys-185-Cys-194, Cys-200-Cys-244, Cys-230-Cys-257, Cys-262-Cys-306, Cys-292-Cys-319, Cys-324-Cys-368, Cys-354-Cys-381, Cys-386-Cys-430, Cys-416-Cys-443, Cys-448-Cys-492, Cys-478-Cys-505, Cys-510-Cys-554, Cys-540-Cys-567, Cys-572-Cys-616, Cys-602-Cys-629, Cys-642-Cys-686, Cys-672-Cys-699, Cys-704-Cys-748, and Cys-734-Cys-761. Glu-121, Asn-123, and Asn-124 together coordinate Ca(2+). An a carbohydrate-binding site is contributed by Asn-123. A carbohydrate is bound by residues Glu-133 and Asn-146. 2 residues coordinate Ca(2+): Asn-146 and Asp-147. An EGF-like domain is found at 159–195 (YTASCQDMSCSKQGECLETIGNYTCSCYPGFYGPECE). N-linked (GlcNAc...) asparagine glycosylation is present at Asn-180. 9 Sushi domains span residues 198–259 (RECG…QCLA), 260–321 (AQCP…VCKA), 322–383 (VQCQ…TCEA), 384–445 (ISCE…VCQA), 446–507 (LQCQ…ECQA), 508–569 (IPCT…MCEA), 570–631 (IKCP…TCKG), 640–701 (VQCP…ACRA), and 702–763 (VKCS…TCQA). N-linked (GlcNAc...) asparagine glycans are attached at residues Asn-212 and Asn-219. Asn-411 carries an N-linked (GlcNAc...) asparagine glycan. An N-linked (GlcNAc...) asparagine glycan is attached at Asn-460. N-linked (GlcNAc...) asparagine glycosylation occurs at Asn-518. Residue Asn-665 is glycosylated (N-linked (GlcNAc...) asparagine). Asn-716, Asn-723, and Asn-741 each carry an N-linked (GlcNAc...) asparagine glycan. A helical transmembrane segment spans residues 772–795 (LTYFGGAVASTIGLIMGGTLLALL). The Cytoplasmic segment spans residues 796 to 830 (RKRFRQKDDGKCPLNPHSHLGTYGVFTNAAFDPSP). Cys-807 is lipidated: S-palmitoyl cysteine; alternate. Cys-807 is lipidated: S-stearoyl cysteine; alternate. The Endocytosis signal motif lies at 818–821 (YGVF). The interaction with SNX17 stretch occupies residues 821–830 (FTNAAFDPSP).

Belongs to the selectin/LECAM family. Interacts with SNX17. Interacts with SELPLG/PSGL1 and PODXL2 and mediates neutrophil adhesion and leukocyte rolling. This interaction requires the sialyl-Lewis X epitope of SELPLG and PODXL2, and specific tyrosine sulfation on SELPLG. Interacts (via C-type lectin domain) with alpha-IIb/beta3 integrin ITGA2B:ITGB3 and alpha-V/beta-3 integrin ITGAV:ITGB3. Interacts with alpha5/beta1 integrin ITGA5:ITGB1 and alpha4/beta1 integrin ITGA4:ITGB. Stored in the alpha-granules of platelets and Weibel-Palade bodies of endothelial cells. Upon cell activation by agonists, P-selectin is transported rapidly to the cell surface.

Its subcellular location is the cell membrane. Ca(2+)-dependent receptor for myeloid cells that binds to carbohydrates on neutrophils and monocytes. Mediates the interaction of activated endothelial cells or platelets with leukocytes. The ligand recognized is sialyl-Lewis X. Mediates rapid rolling of leukocyte rolling over vascular surfaces during the initial steps in inflammation through interaction with SELPLG. Mediates cell-cell interactions and cell adhesion via the interaction with integrin alpha-IIb/beta3 (ITGA2B:ITGB3) and integrin alpha-V/beta-3 (ITGAV:ITGB3). In Homo sapiens (Human), this protein is P-selectin (SELP).